A 320-amino-acid polypeptide reads, in one-letter code: Bifunctional protein FolD 2 (320 aa).

NADP(+)-binding positions include 173–175 (GRS) and Ile-242.

It belongs to the tetrahydrofolate dehydrogenase/cyclohydrolase family. In terms of assembly, homodimer.

The catalysed reaction is (6R)-5,10-methylene-5,6,7,8-tetrahydrofolate + NADP(+) = (6R)-5,10-methenyltetrahydrofolate + NADPH. It carries out the reaction (6R)-5,10-methenyltetrahydrofolate + H2O = (6R)-10-formyltetrahydrofolate + H(+). It participates in one-carbon metabolism; tetrahydrofolate interconversion. Its function is as follows. Catalyzes the oxidation of 5,10-methylenetetrahydrofolate to 5,10-methenyltetrahydrofolate and then the hydrolysis of 5,10-methenyltetrahydrofolate to 10-formyltetrahydrofolate. The polypeptide is Bifunctional protein FolD 2 (Rubrobacter xylanophilus (strain DSM 9941 / JCM 11954 / NBRC 16129 / PRD-1)).